A 205-amino-acid chain; its full sequence is Ribonuclease HII (205 aa).

Residues 14 to 205 (SLISGIDEAG…SFRLKQLGEK (192 aa)) enclose the RNase H type-2 domain. A divalent metal cation contacts are provided by D20, E21, and D117.

Belongs to the RNase HII family. Mn(2+) is required as a cofactor. It depends on Mg(2+) as a cofactor.

It localises to the cytoplasm. It catalyses the reaction Endonucleolytic cleavage to 5'-phosphomonoester.. In terms of biological role, endonuclease that specifically degrades the RNA of RNA-DNA hybrids. This is Ribonuclease HII from Chlorobium phaeobacteroides (strain DSM 266 / SMG 266 / 2430).